The following is a 307-amino-acid chain: MGSQLALKSRIRSTESLAKIFNAQEMIASSHIAKARDVALNAKPYTDAIFDAVQALVAHTHITHPIAVKDEKNPRVAVLALTSDRGMAGPYTSSIIRETESLLSRLDAAGKQPELFVYGRRGSTYYKYRNRDIAATWEGDTDQPGVEIAETISNTLMDAYMKPAEKGGVSELYIVYTEFINMVVQKVRVLRMLPVEIVKNETKVPDPDEEAPATADVAPLYTFEPSLEKVLDAILPKYIQSRIHECLLTAAASETASRQNAMHTATDNARNLIDDLTRKLNASRQASITQELTEIIGSADALTKKEE.

Belongs to the ATPase gamma chain family. F-type ATPases have 2 components, CF(1) - the catalytic core - and CF(0) - the membrane proton channel. CF(1) has five subunits: alpha(3), beta(3), gamma(1), delta(1), epsilon(1). CF(0) has three main subunits: a, b and c.

The protein localises to the cell membrane. In terms of biological role, produces ATP from ADP in the presence of a proton gradient across the membrane. The gamma chain is believed to be important in regulating ATPase activity and the flow of protons through the CF(0) complex. The sequence is that of ATP synthase gamma chain from Bifidobacterium longum (strain DJO10A).